The chain runs to 139 residues: Putative pre-16S rRNA nuclease (139 aa).

It belongs to the YqgF nuclease family.

It localises to the cytoplasm. Could be a nuclease involved in processing of the 5'-end of pre-16S rRNA. The chain is Putative pre-16S rRNA nuclease from Streptococcus pyogenes serotype M3 (strain ATCC BAA-595 / MGAS315).